The primary structure comprises 148 residues: Small ribosomal subunit protein bS16 (148 aa).

Positions 106 to 148 (QAAARAAAGAEDRPATTPKKAKKSGSAEEAEAAPATDAPAAGQ) are disordered. A compositionally biased stretch (low complexity) spans 137 to 148 (AAPATDAPAAGQ).

It belongs to the bacterial ribosomal protein bS16 family.

The sequence is that of Small ribosomal subunit protein bS16 from Frankia casuarinae (strain DSM 45818 / CECT 9043 / HFP020203 / CcI3).